The sequence spans 398 residues: Acetate kinase 1 (398 aa).

Asn9 contributes to the Mg(2+) binding site. ATP is bound at residue Lys16. Residue Arg89 coordinates substrate. The Proton donor/acceptor role is filled by Asp146. ATP contacts are provided by residues 206-210 (HLGNG), 281-283 (DCR), and 329-333 (GIGEN). Glu384 lines the Mg(2+) pocket.

It belongs to the acetokinase family. In terms of assembly, homodimer. Mg(2+) is required as a cofactor. The cofactor is Mn(2+).

Its subcellular location is the cytoplasm. The enzyme catalyses acetate + ATP = acetyl phosphate + ADP. It participates in metabolic intermediate biosynthesis; acetyl-CoA biosynthesis; acetyl-CoA from acetate: step 1/2. Functionally, catalyzes the formation of acetyl phosphate from acetate and ATP. Can also catalyze the reverse reaction. This chain is Acetate kinase 1, found in Vibrio parahaemolyticus serotype O3:K6 (strain RIMD 2210633).